A 130-amino-acid chain; its full sequence is Histone H2A type 1-C (130 aa).

The disordered stretch occupies residues 1-22; sequence MSGRGKQGGKARAKAKSRSSRA. Position 2 is an N-acetylserine (Ser-2). At Ser-2 the chain carries Phosphoserine; by RPS6KA5. Arg-4 is subject to Citrulline; alternate. Arg-4 is modified (symmetric dimethylarginine; by PRMT5; alternate). Lys-6 and Lys-10 each carry N6-(2-hydroxyisobutyryl)lysine; alternate. Lys-6 bears the N6-acetyllysine; alternate mark. A compositionally biased stretch (basic residues) spans 7–19; the sequence is QGGKARAKAKSRS. 2 positions are modified to N6-(beta-hydroxybutyryl)lysine; alternate: Lys-10 and Lys-14. An N6-lactoyllysine; alternate modification is found at Lys-10. Lys-10 bears the N6-succinyllysine; alternate mark. A Glycyl lysine isopeptide (Lys-Gly) (interchain with G-Cter in ubiquitin); alternate cross-link involves residue Lys-14. Lys-16 participates in a covalent cross-link: Glycyl lysine isopeptide (Lys-Gly) (interchain with G-Cter in ubiquitin). An N6-(2-hydroxyisobutyryl)lysine; alternate modification is found at Lys-37. Position 37 is an N6-(beta-hydroxybutyryl)lysine; alternate (Lys-37). Lys-37 carries the post-translational modification N6-crotonyllysine; alternate. 2 positions are modified to N6-(2-hydroxyisobutyryl)lysine: Lys-75 and Lys-76. At Lys-96 the chain carries N6-(2-hydroxyisobutyryl)lysine; alternate. An N6-(beta-hydroxybutyryl)lysine; alternate modification is found at Lys-96. Lys-96 is modified (N6-succinyllysine; alternate). Lys-96 carries the N6-glutaryllysine; alternate modification. Gln-105 carries the N5-methylglutamine modification. Lys-119 carries the N6-(2-hydroxyisobutyryl)lysine; alternate modification. An N6-(beta-hydroxybutyryl)lysine; alternate modification is found at Lys-119. 2 positions are modified to N6-crotonyllysine; alternate: Lys-119 and Lys-120. Lys-119 and Lys-120 each carry N6-glutaryllysine; alternate. Lys-120 is covalently cross-linked (Glycyl lysine isopeptide (Lys-Gly) (interchain with G-Cter in ubiquitin); alternate). Position 121 is a phosphothreonine; by DCAF1 (Thr-121). Lys-126 carries the post-translational modification N6-crotonyllysine; alternate. Residue Lys-126 is modified to N6-glutaryllysine; alternate.

The protein belongs to the histone H2A family. As to quaternary structure, the nucleosome is a histone octamer containing two molecules each of H2A, H2B, H3 and H4 assembled in one H3-H4 heterotetramer and two H2A-H2B heterodimers. The octamer wraps approximately 147 bp of DNA. Deiminated on Arg-4 in granulocytes upon calcium entry. Post-translationally, monoubiquitination of Lys-120 (H2AK119Ub) by RING1, TRIM37 and RNF2/RING2 complex gives a specific tag for epigenetic transcriptional repression and participates in X chromosome inactivation of female mammals. It is involved in the initiation of both imprinted and random X inactivation. Ubiquitinated H2A is enriched in inactive X chromosome chromatin. Ubiquitination of H2A functions downstream of methylation of 'Lys-27' of histone H3 (H3K27me). H2AK119Ub by RNF2/RING2 can also be induced by ultraviolet and may be involved in DNA repair. Monoubiquitination of Lys-120 (H2AK119Ub) by TRIM37 may promote transformation of cells in a number of breast cancers. Following DNA double-strand breaks (DSBs), it is ubiquitinated through 'Lys-63' linkage of ubiquitin moieties by the E2 ligase UBE2N and the E3 ligases RNF8 and RNF168, leading to the recruitment of repair proteins to sites of DNA damage. Ubiquitination at Lys-14 and Lys-16 (H2AK13Ub and H2AK15Ub, respectively) in response to DNA damage is initiated by RNF168 that mediates monoubiquitination at these 2 sites, and 'Lys-63'-linked ubiquitin are then conjugated to monoubiquitin; RNF8 is able to extend 'Lys-63'-linked ubiquitin chains in vitro. Deubiquitinated by USP51 at Lys-14 and Lys-16 (H2AK13Ub and H2AK15Ub, respectively) after damaged DNA is repaired. H2AK119Ub and ionizing radiation-induced 'Lys-63'-linked ubiquitination (H2AK13Ub and H2AK15Ub) are distinct events. In terms of processing, phosphorylation on Ser-2 (H2AS1ph) is enhanced during mitosis. Phosphorylation on Ser-2 by RPS6KA5/MSK1 directly represses transcription. Acetylation of H3 inhibits Ser-2 phosphorylation by RPS6KA5/MSK1. Phosphorylation at Thr-121 (H2AT120ph) by DCAF1 is present in the regulatory region of many tumor suppresor genes and down-regulates their transcription. Glutamine methylation at Gln-105 (H2AQ104me) by FBL is specifically dedicated to polymerase I. It is present at 35S ribosomal DNA locus and impairs binding of the FACT complex. Post-translationally, symmetric dimethylation on Arg-4 by the PRDM1/PRMT5 complex may play a crucial role in the germ-cell lineage. In terms of processing, crotonylation (Kcr) is specifically present in male germ cells and marks testis-specific genes in post-meiotic cells, including X-linked genes that escape sex chromosome inactivation in haploid cells. Crotonylation marks active promoters and enhancers and confers resistance to transcriptional repressors. It is also associated with post-meiotically activated genes on autosomes. Lactylated in macrophages by EP300/P300 by using lactoyl-CoA directly derived from endogenous or exogenous lactate, leading to stimulates gene transcription.

Its subcellular location is the nucleus. The protein resides in the chromosome. Its function is as follows. Core component of nucleosome. Nucleosomes wrap and compact DNA into chromatin, limiting DNA accessibility to the cellular machineries which require DNA as a template. Histones thereby play a central role in transcription regulation, DNA repair, DNA replication and chromosomal stability. DNA accessibility is regulated via a complex set of post-translational modifications of histones, also called histone code, and nucleosome remodeling. The polypeptide is Histone H2A type 1-C (Homo sapiens (Human)).